The following is a 276-amino-acid chain: NADPH-dependent 7-cyano-7-deazaguanine reductase (276 aa).

83-85 (IES) lines the substrate pocket. 85-86 (SK) contacts NADPH. The active-site Thioimide intermediate is C184. D191 serves as the catalytic Proton donor. Residue 223–224 (HE) coordinates substrate. 252–253 (RG) contributes to the NADPH binding site.

This sequence belongs to the GTP cyclohydrolase I family. QueF type 2 subfamily. In terms of assembly, homodimer.

It is found in the cytoplasm. It catalyses the reaction 7-aminomethyl-7-carbaguanine + 2 NADP(+) = 7-cyano-7-deazaguanine + 2 NADPH + 3 H(+). It participates in tRNA modification; tRNA-queuosine biosynthesis. Catalyzes the NADPH-dependent reduction of 7-cyano-7-deazaguanine (preQ0) to 7-aminomethyl-7-deazaguanine (preQ1). The protein is NADPH-dependent 7-cyano-7-deazaguanine reductase of Ectopseudomonas mendocina (strain ymp) (Pseudomonas mendocina).